The sequence spans 354 residues: Polyribonucleotide 5'-hydroxyl-kinase PYRAB01840 (354 aa).

36-43 (GDVDTGKT) contacts ATP.

Requires a divalent metal cation as cofactor.

It carries out the reaction a 5'-end dephospho-2'-deoxyribonucleoside-DNA + ATP = a 5'-end 5'-phospho-2'-deoxyribonucleoside-DNA + ADP + H(+). It catalyses the reaction a 5'-end dephospho-ribonucleoside-RNA + ATP = a 5'-end 5'-phospho-ribonucleoside-RNA + ADP + H(+). In terms of biological role, polynucleotide kinase that can phosphorylate the 5'-hydroxyl groups of both single-stranded RNA (ssRNA) and single-stranded DNA (ssDNA). Exhibits a strong preference for ssRNA. In Pyrococcus abyssi (strain GE5 / Orsay), this protein is Polyribonucleotide 5'-hydroxyl-kinase PYRAB01840.